Consider the following 54-residue polypeptide: 2-aminomuconate deaminase (54 aa).

Homohexamer.

The enzyme catalyses (2Z,4E)-2-aminomuconate + H2O = (3E)-2-oxohex-3-enedioate + NH4(+). It participates in xenobiotic degradation; nitrobenzene degradation. Its function is as follows. Converts 2-aminomuconate to 4-oxalocrotonate, an intermediate step in the biodegradation of nitrobenzene. The polypeptide is 2-aminomuconate deaminase (Ectopseudomonas oleovorans (Pseudomonas oleovorans)).